Consider the following 221-residue polypeptide: UPF0758 protein Ent638_0101 (221 aa).

The MPN domain maps to 99–221 (PLLSPEMTKD…YVSFAEQGWI (123 aa)). Positions 170, 172, and 183 each coordinate Zn(2+). A JAMM motif motif is present at residues 170–183 (HNHPSGCAEPSKAD).

Belongs to the UPF0758 family. YicR subfamily.

This Enterobacter sp. (strain 638) protein is UPF0758 protein Ent638_0101.